The following is an 833-amino-acid chain: cGMP-specific 3',5'-cyclic phosphodiesterase (833 aa).

The residue at position 60 (Ser-60) is a Phosphoserine. Positions 82-101 (FLSDSGKKEQMPLTSPRFDS) are disordered. GAF domains lie at 122–272 (DVTA…GIVL) and 304–461 (SLEV…GLGI). The region spanning 494–818 (ETRELQALAA…QKWQALADQQ (325 aa)) is the PDEase domain. His-571 (proton donor) is an active-site residue. Residues His-575, His-611, Asp-612, and Asp-722 each contribute to the Zn(2+) site. Residue Asp-612 participates in Mg(2+) binding. Gln-775 lines the 3',5'-cyclic GMP pocket.

It belongs to the cyclic nucleotide phosphodiesterase family. Requires Zn(2+) as cofactor. Mg(2+) serves as cofactor. Post-translationally, phosphorylation is regulated by binding of cGMP to the two allosteric sites. Phosphorylation by PRKG1 leads to its activation.

It catalyses the reaction 3',5'-cyclic GMP + H2O = GMP + H(+). Its pathway is purine metabolism; 3',5'-cyclic GMP degradation; GMP from 3',5'-cyclic GMP: step 1/1. In terms of biological role, plays a role in signal transduction by regulating the intracellular concentration of cyclic nucleotides. This phosphodiesterase catalyzes the specific hydrolysis of cGMP to 5'-GMP. Specifically regulates nitric-oxide-generated cGMP. The polypeptide is cGMP-specific 3',5'-cyclic phosphodiesterase (Pde5a) (Rattus norvegicus (Rat)).